Here is a 241-residue protein sequence, read N- to C-terminus: Ubiquinone biosynthesis O-methyltransferase (241 aa).

R42, G62, D83, and M127 together coordinate S-adenosyl-L-methionine.

It belongs to the methyltransferase superfamily. UbiG/COQ3 family.

The catalysed reaction is a 3-demethylubiquinol + S-adenosyl-L-methionine = a ubiquinol + S-adenosyl-L-homocysteine + H(+). It carries out the reaction a 3-(all-trans-polyprenyl)benzene-1,2-diol + S-adenosyl-L-methionine = a 2-methoxy-6-(all-trans-polyprenyl)phenol + S-adenosyl-L-homocysteine + H(+). Its pathway is cofactor biosynthesis; ubiquinone biosynthesis. Its function is as follows. O-methyltransferase that catalyzes the 2 O-methylation steps in the ubiquinone biosynthetic pathway. The polypeptide is Ubiquinone biosynthesis O-methyltransferase (Pectobacterium atrosepticum (strain SCRI 1043 / ATCC BAA-672) (Erwinia carotovora subsp. atroseptica)).